Here is a 411-residue protein sequence, read N- to C-terminus: Exodeoxyribonuclease 7 large subunit (411 aa).

Belongs to the XseA family. In terms of assembly, heterooligomer composed of large and small subunits.

The protein localises to the cytoplasm. The catalysed reaction is Exonucleolytic cleavage in either 5'- to 3'- or 3'- to 5'-direction to yield nucleoside 5'-phosphates.. In terms of biological role, bidirectionally degrades single-stranded DNA into large acid-insoluble oligonucleotides, which are then degraded further into small acid-soluble oligonucleotides. The chain is Exodeoxyribonuclease 7 large subunit from Mycobacterium sp. (strain JLS).